Here is a 241-residue protein sequence, read N- to C-terminus: Carboxy-S-adenosyl-L-methionine synthase (241 aa).

Residues tyrosine 38, 63–65 (GCS), 88–89 (DN), 116–117 (DI), asparagine 131, and arginine 198 contribute to the S-adenosyl-L-methionine site.

This sequence belongs to the class I-like SAM-binding methyltransferase superfamily. Cx-SAM synthase family. As to quaternary structure, homodimer.

It carries out the reaction prephenate + S-adenosyl-L-methionine = carboxy-S-adenosyl-L-methionine + 3-phenylpyruvate + H2O. Functionally, catalyzes the conversion of S-adenosyl-L-methionine (SAM) to carboxy-S-adenosyl-L-methionine (Cx-SAM). This chain is Carboxy-S-adenosyl-L-methionine synthase, found in Haemophilus influenzae (strain PittGG).